Consider the following 545-residue polypeptide: uncharacterized protein (545 aa).

Basic residues predominate over residues Met1 to Arg10. Positions Met1 to Pro25 are disordered. 2 WD repeats span residues Ala417–Met456 and Gly460–Ser501.

This is an uncharacterized protein from Caenorhabditis elegans.